We begin with the raw amino-acid sequence, 250 residues long: 5'-nucleotidase SurE (250 aa).

4 residues coordinate a divalent metal cation: D8, D9, S39, and N91.

The protein belongs to the SurE nucleotidase family. It depends on a divalent metal cation as a cofactor.

The protein resides in the cytoplasm. The catalysed reaction is a ribonucleoside 5'-phosphate + H2O = a ribonucleoside + phosphate. Its function is as follows. Nucleotidase that shows phosphatase activity on nucleoside 5'-monophosphates. In Shewanella halifaxensis (strain HAW-EB4), this protein is 5'-nucleotidase SurE.